The primary structure comprises 238 residues: Synapse differentiation-inducing gene protein 1-like (238 aa).

Disordered regions lie at residues 1–24 (MESLSELQNPLLPRSPTHLHGPYP), 78–111 (KVKEPRPGSCETSFTEGREPPAGPTERSTEPGQA), and 126–155 (EEFQGQEGDPEEEESDATSTESESEDNFLT). Over 1–162 (MESLSELQNP…FLTLPPRDHL (162 aa)) the chain is Extracellular. Acidic residues predominate over residues 133–151 (GDPEEEESDATSTESESED). A helical transmembrane segment spans residues 163–183 (GLTIFSMLCCFWPLGIAAFYF). Topologically, residues 184–205 (SQGTSKAISKGDFRLANTTSRR) are cytoplasmic. The helical transmembrane segment at 206 to 226 (ALFLATLSIAVGAGLYVAVVV) threads the bilayer. The Extracellular segment spans residues 227 to 238 (ALAAYMSQNGHS).

It belongs to the CD225/Dispanin family.

The protein resides in the membrane. Its subcellular location is the golgi apparatus. It is found in the cis-Golgi network. The chain is Synapse differentiation-inducing gene protein 1-like (SYNDIG1L) from Bos taurus (Bovine).